A 795-amino-acid polypeptide reads, in one-letter code: Phenylalanine--tRNA ligase beta subunit (795 aa).

A tRNA-binding domain is found at 39–148 (AGSFHGVVVG…ADAPIGTDIR (110 aa)). Residues 401 to 476 (PKRATITLRR…RVYGYNNIPD (76 aa)) form the B5 domain. Positions 454, 460, 463, and 464 each coordinate Mg(2+). The 94-residue stretch at 701–794 (SRFPANRRDI…LKERFQASLR (94 aa)) folds into the FDX-ACB domain.

It belongs to the phenylalanyl-tRNA synthetase beta subunit family. Type 1 subfamily. Tetramer of two alpha and two beta subunits. The cofactor is Mg(2+).

The protein localises to the cytoplasm. The enzyme catalyses tRNA(Phe) + L-phenylalanine + ATP = L-phenylalanyl-tRNA(Phe) + AMP + diphosphate + H(+). This chain is Phenylalanine--tRNA ligase beta subunit, found in Shigella flexneri.